A 167-amino-acid polypeptide reads, in one-letter code: Small ribosomal subunit protein uS5 (167 aa).

The 64-residue stretch at 12-75 (LQEKLIAVNR…EKARRNMVTV (64 aa)) folds into the S5 DRBM domain.

It belongs to the universal ribosomal protein uS5 family. Part of the 30S ribosomal subunit. Contacts proteins S4 and S8.

Functionally, with S4 and S12 plays an important role in translational accuracy. Located at the back of the 30S subunit body where it stabilizes the conformation of the head with respect to the body. This chain is Small ribosomal subunit protein uS5, found in Shewanella oneidensis (strain ATCC 700550 / JCM 31522 / CIP 106686 / LMG 19005 / NCIMB 14063 / MR-1).